A 408-amino-acid polypeptide reads, in one-letter code: Argininosuccinate synthase (408 aa).

ATP is bound at residue A8 to S16. Y86 provides a ligand contact to L-citrulline. G116 is an ATP binding site. The L-aspartate site is built by T118, N122, and D123. An L-citrulline-binding site is contributed by N122. L-citrulline-binding residues include R126, S174, E259, and Y271.

This sequence belongs to the argininosuccinate synthase family. Type 1 subfamily. As to quaternary structure, homotetramer.

It localises to the cytoplasm. The catalysed reaction is L-citrulline + L-aspartate + ATP = 2-(N(omega)-L-arginino)succinate + AMP + diphosphate + H(+). It functions in the pathway amino-acid biosynthesis; L-arginine biosynthesis; L-arginine from L-ornithine and carbamoyl phosphate: step 2/3. This is Argininosuccinate synthase from Leuconostoc mesenteroides subsp. mesenteroides (strain ATCC 8293 / DSM 20343 / BCRC 11652 / CCM 1803 / JCM 6124 / NCDO 523 / NBRC 100496 / NCIMB 8023 / NCTC 12954 / NRRL B-1118 / 37Y).